Reading from the N-terminus, the 185-residue chain is Signal peptidase I (185 aa).

At 1–20 (MKSEKEKTSKKSAVLDWAKA) the chain is on the cytoplasmic side. Residues 21–41 (IIIAVVLAVLIRNFLFAPYVV) form a helical membrane-spanning segment. The Extracellular portion of the chain corresponds to 42-185 (DGESMEPTLH…FPFNEIRKTK (144 aa)). Catalysis depends on residues Ser45 and Lys85.

The protein belongs to the peptidase S26 family.

The protein localises to the cell membrane. It carries out the reaction Cleavage of hydrophobic, N-terminal signal or leader sequences from secreted and periplasmic proteins.. This Bacillus amyloliquefaciens (Bacillus velezensis) protein is Signal peptidase I (sipA).